A 113-amino-acid polypeptide reads, in one-letter code: uncharacterized protein (113 aa).

One can recognise a Cupin type-2 domain in the interval 41 to 88 (DWHHHPDSDELFIVLEGELLIDFKDKETAVLKANDSLLIPKGTVHRTR).

This sequence belongs to the SchB/CurC family.

This is an uncharacterized protein from Bacillus subtilis (strain 168).